The following is a 987-amino-acid chain: Collagen alpha-1(I) chain (987 aa).

Residues 1 to 21 (SVPGPMGPSGPRGLPGPPGPG) are compositionally biased toward pro residues. Residues 1-987 (SVPGPMGPSG…PGPPGPPGPP (987 aa)) form a disordered region. 4-hydroxyproline is present on residues Pro15, Pro18, Pro20, Pro29, Pro32, Pro35, Pro50, Pro65, Pro71, Pro80, and Pro86. Residues 23-41 (QGFQGPPGEPGEPGSSGPM) are compositionally biased toward low complexity. Basic and acidic residues predominate over residues 53 to 67 (NGDDGEAGKPGRPGE). At Lys89 the chain carries 5-hydroxylysine; alternate. An O-linked (Gal...) hydroxylysine; alternate glycan is attached at Lys89. At Ser95 the chain carries Phosphoserine. Positions 103 to 119 (DAGPAGPKGEPGSPGEN) are enriched in low complexity. A 4-hydroxyproline mark is found at Pro113, Pro116, Pro122, Pro131, Pro137, Pro158, Pro167, Pro170, Pro197, Pro200, Pro212, Pro218, Pro227, Pro233, Pro236, and Pro251. Residues 137–155 (PGASGPAGARGNDGAAGAA) are compositionally biased toward low complexity. Residues 157-169 (PPGPTGPAGPPGF) show a composition bias toward pro residues. Over residues 203-253 (AGAAGPAGNPGADGQPGAKGANGAPGIAGAPGFPGARGPSGPQGPSGAPGP) the composition is skewed to low complexity. At Lys254 the chain carries 5-hydroxylysine. Pro260, Pro263, Pro275, Pro284, Pro299, Pro305, Pro314, and Pro320 each carry 4-hydroxyproline. Positions 309 to 318 (GERGGPGSRG) are enriched in gly residues. Position 329 is a 5-hydroxylysine (Lys329). Pro338, Pro347, Pro353, Pro359, Pro368, Pro371, Pro380, Pro389, Pro395, Pro407, Pro416, Pro425, Pro428, Pro446, Pro468, Pro474, Pro480, Pro486, Pro492, Pro504, Pro513, Pro526, Pro532, and Pro541 each carry 4-hydroxyproline. The segment covering 362–388 (KGLTGSPGSPGPDGKTGPPGPAGQDGR) has biased composition (low complexity). Residues 397–416 (ARGQAGVMGFPGPKGAAGEP) are compositionally biased toward low complexity. A compositionally biased stretch (low complexity) spans 458 to 483 (QGPAPGFQGLPGPAGPPGEAGKPGEQ). Residue Lys553 is modified to 5-hydroxylysine. Pro559, Pro574, and Pro580 each carry 4-hydroxyproline. A compositionally biased stretch (low complexity) spans 586–600 (SGPSGPAGPTGARGA). Position 589 is a phosphoserine (Ser589). 4-hydroxyproline is present on residues Pro601, Pro607, Pro610, Pro619, Pro625, Pro643, Pro652, and Pro661. Low complexity predominate over residues 613–640 (AGFAGPPGADGQPGAKGEPGDAGAKGDA). The segment covering 642 to 654 (PPGPAGPTGPPGP) has biased composition (pro residues). Lys664 bears the 5-hydroxylysine mark. The segment covering 669-685 (SAGPPGATGFPGAAGRV) has biased composition (low complexity). A 4-hydroxyproline mark is found at Pro673 and Pro679. Pro687 is modified (3-hydroxyproline). 4-hydroxyproline occurs at positions 688, 697, 700, 721, 730, 738, 747, 765, 774, 777, 783, 798, 804, 810, 819, and 825. The span at 714-723 (ETGPAGRPGE) shows a compositional bias: low complexity. Low complexity predominate over residues 735-747 (KGSPGADGPAGAP). The span at 797–807 (PPGPMGPPGLA) shows a compositional bias: pro residues. Over residues 809-824 (PPGESGREGSPGAEGS) the composition is skewed to low complexity. 5-hydroxylysine is present on Lys834. The segment covering 843-858 (AGPPGAPGAPGAPGPV) has biased composition (pro residues). A 4-hydroxyproline mark is found at Pro846, Pro849, and Pro852. Residues 879–893 (AGPAGARGPAGPQGP) are compositionally biased toward low complexity. Positions 894–905 (RGDKGETGEQGD) are enriched in basic and acidic residues. Position 897 is a 5-hydroxylysine (Lys897). 4-hydroxyproline is present on residues Pro918, Pro921, Pro939, and Pro954. A compositionally biased stretch (low complexity) spans 921–954 (PGEQGPSGASGPAGPRGPPGSAGSPGKDGLNGLP). At Pro959 the chain carries 3-hydroxyproline. 4-hydroxyproline is present on Pro960. Residues 972 to 987 (VGPPGPPGPPGPPGPP) are compositionally biased toward pro residues. 3-hydroxyproline is present on Pro974. At Pro975 the chain carries 4-hydroxyproline. Pro977 carries the post-translational modification 3-hydroxyproline. At Pro978 the chain carries 4-hydroxyproline. Pro980 is subject to 3-hydroxyproline. 3 positions are modified to 4-hydroxyproline: Pro981, Pro984, and Pro987.

This sequence belongs to the fibrillar collagen family. In terms of assembly, trimers of one alpha 2(I) and two alpha 1(I) chains. In terms of processing, contains mostly 4-hydroxyproline. Proline residues at the third position of the tripeptide repeating unit (G-X-Y) are hydroxylated in some or all of the chains. Post-translationally, contains 3-hydroxyproline at a few sites. This modification occurs on the first proline residue in the sequence motif Gly-Pro-Hyp, where Hyp is 4-hydroxyproline. Lysine residues at the third position of the tripeptide repeating unit (G-X-Y) are 5-hydroxylated in some or all of the chains. In terms of processing, O-glycosylated on hydroxylated lysine residues. The O-linked glycan consists of a Glc-Gal disaccharide. In terms of tissue distribution, expressed in bones.

It is found in the secreted. The protein localises to the extracellular space. The protein resides in the extracellular matrix. In terms of biological role, type I collagen is a member of group I collagen (fibrillar forming collagen). The protein is Collagen alpha-1(I) chain of Glossotherium robustum (Ground sloth).